Reading from the N-terminus, the 59-residue chain is Large ribosomal subunit protein bL32 (59 aa).

The segment at 1-24 is disordered; it reads MAVQQNKKSPSKRGMHRSHDFLTS.

Belongs to the bacterial ribosomal protein bL32 family.

This Ralstonia nicotianae (strain ATCC BAA-1114 / GMI1000) (Ralstonia solanacearum) protein is Large ribosomal subunit protein bL32.